A 180-amino-acid polypeptide reads, in one-letter code: NAD(P)H-quinone oxidoreductase subunit I, chloroplastic (180 aa).

4Fe-4S ferredoxin-type domains follow at residues 55 to 84 and 95 to 124; these read GRIHFEFDKCIACEVCVRVCPIDLPLVDWR and LNYSIDFGVCIFCGNCVEYCPTNCLSMTEE. [4Fe-4S] cluster-binding residues include C64, C67, C70, C74, C104, C107, C110, and C114.

This sequence belongs to the complex I 23 kDa subunit family. In terms of assembly, NDH is composed of at least 16 different subunits, 5 of which are encoded in the nucleus. The cofactor is [4Fe-4S] cluster.

It is found in the plastid. It localises to the chloroplast thylakoid membrane. The catalysed reaction is a plastoquinone + NADH + (n+1) H(+)(in) = a plastoquinol + NAD(+) + n H(+)(out). It catalyses the reaction a plastoquinone + NADPH + (n+1) H(+)(in) = a plastoquinol + NADP(+) + n H(+)(out). Its function is as follows. NDH shuttles electrons from NAD(P)H:plastoquinone, via FMN and iron-sulfur (Fe-S) centers, to quinones in the photosynthetic chain and possibly in a chloroplast respiratory chain. The immediate electron acceptor for the enzyme in this species is believed to be plastoquinone. Couples the redox reaction to proton translocation, and thus conserves the redox energy in a proton gradient. The sequence is that of NAD(P)H-quinone oxidoreductase subunit I, chloroplastic from Oryza nivara (Indian wild rice).